Consider the following 1809-residue polypeptide: Stereocilin (1809 aa).

Residues 1–22 (MALSLQPQLLLLLSLLPQEVTS) form the signal peptide. Residues Asn63, Asn200, Asn295, Asn352, and Asn364 are each glycosylated (N-linked (GlcNAc...) asparagine). Residues 376–426 (PATPRPPPTTPRPPPTTPQPPPTTTQPIPDTTQPPPVTPRPPPTTPQPPPS) form a disordered region. 2 stretches are compositionally biased toward pro residues: residues 378–399 (TPRPPPTTPRPPPTTPQPPPTT) and 407–426 (TQPPPVTPRPPPTTPQPPPS). Residues Asn467, Asn516, Asn580, Asn605, Asn696, Asn860, Asn952, Asn1000, Asn1213, and Asn1308 are each glycosylated (N-linked (GlcNAc...) asparagine).

Belongs to the stereocilin family. As to expression, strongly expressed in the inner ear, detected in the testis, and barely detected in the eye. Detected in the six sensory areas of the inner ear by immunofluorescence. Expressed only in the sensory hair cells and associated with the stereocilia, the stiff microvilli forming the structure for mechanoreception of sound stimulation.

The protein localises to the cell surface. It localises to the cell projection. Its subcellular location is the kinocilium. The protein resides in the stereocilium. Essential to the formation of horizontal top connectors between outer hair cell stereocilia. The protein is Stereocilin (Strc) of Mus musculus (Mouse).